The primary structure comprises 88 residues: Apolipoprotein C-I (88 aa).

An N-terminal signal peptide occupies residues 1-26; the sequence is MRLFLSLPVLVVVLAMVWEGPAPTQA.

It belongs to the apolipoprotein C1 family.

It is found in the secreted. In terms of biological role, inhibitor of lipoprotein binding to the low density lipoprotein (LDL) receptor, LDL receptor-related protein, and very low density lipoprotein (VLDL) receptor. Associates with high density lipoproteins (HDL) and the triacylglycerol-rich lipoproteins in the plasma and makes up about 10% of the protein of the VLDL and 2% of that of HDL. Appears to interfere directly with fatty acid uptake and is also the major plasma inhibitor of cholesteryl ester transfer protein (CETP). Binds free fatty acids and reduces their intracellular esterification. Modulates the interaction of APOE with beta-migrating VLDL and inhibits binding of beta-VLDL to the LDL receptor-related protein. This chain is Apolipoprotein C-I (APOC1), found in Neomonachus schauinslandi (Hawaiian monk seal).